A 340-amino-acid chain; its full sequence is NAC domain-containing protein 89 (340 aa).

The NAC domain maps to 21–164 (VFPGFKFSPT…AMVVCRVRRN (144 aa)). Residues 119–170 (IGTKRTLVFHIGRAPKGERTDWIMHEYCVKGVSLDDAMVVCRVRRNKEYNSG) mediate DNA binding. Residues 167–181 (YNSGTSQKAPKPNSS) show a composition bias toward polar residues. Residues 167 to 198 (YNSGTSQKAPKPNSSAEKHAKVQNGATSSGSP) are disordered.

Interacts with PAS1.

The protein localises to the cytoplasm. It is found in the nucleus. Transcription factor involved in plant cell division. This is NAC domain-containing protein 89 (NAC089) from Arabidopsis thaliana (Mouse-ear cress).